The following is a 199-amino-acid chain: Chaperone protein TorD (199 aa).

The protein belongs to the TorD/DmsD family. TorD subfamily.

The protein localises to the cytoplasm. Involved in the biogenesis of TorA. Acts on TorA before the insertion of the molybdenum cofactor and, as a result, probably favors a conformation of the apoenzyme that is competent for acquiring the cofactor. The chain is Chaperone protein TorD from Escherichia coli O7:K1 (strain IAI39 / ExPEC).